A 142-amino-acid chain; its full sequence is Protein spalt-accessory (142 aa).

The N-terminal stretch at 1-16 (MKLLIALFVLVNAVIA) is a signal peptide. Positions 65–77 (GQGGVSPGQGGFA) are enriched in gly residues. Positions 65–142 (GQGGVSPGQG…HHEHHGHHRH (78 aa)) are disordered. Positions 112–124 (NHHEYPEHHGDHH) are enriched in basic and acidic residues. Basic residues predominate over residues 125-142 (REHHEHHGHHEHHGHHRH).

The protein resides in the secreted. Its function is as follows. Likely to be involved in the establishment of the head. The polypeptide is Protein spalt-accessory (sala) (Drosophila orena (Fruit fly)).